A 150-amino-acid chain; its full sequence is MQVILLEKVINLGNLGDIVKVKDGYARNFLIPSKKARRATQTAIAEFEVKRAELEKAAAEKLAAAQAEGEKLNGLNVQITQKSGVDGRLFGSVTNADIAEALAGQGYKLEKSQVRLPNGPLKMVGDHPVSVALHTDVVVDVTVSVVGESV.

Belongs to the bacterial ribosomal protein bL9 family.

Binds to the 23S rRNA. The protein is Large ribosomal subunit protein bL9 of Cupriavidus taiwanensis (strain DSM 17343 / BCRC 17206 / CCUG 44338 / CIP 107171 / LMG 19424 / R1) (Ralstonia taiwanensis (strain LMG 19424)).